A 71-amino-acid polypeptide reads, in one-letter code: ATP synthase subunit c (71 aa).

A run of 2 helical transmembrane segments spans residues 4 to 24 (IAAA…NGQV) and 47 to 67 (FIGV…ALIL).

Belongs to the ATPase C chain family. As to quaternary structure, F-type ATPases have 2 components, F(1) - the catalytic core - and F(0) - the membrane proton channel. F(1) has five subunits: alpha(3), beta(3), gamma(1), delta(1), epsilon(1). F(0) has three main subunits: a(1), b(2) and c(10-14). The alpha and beta chains form an alternating ring which encloses part of the gamma chain. F(1) is attached to F(0) by a central stalk formed by the gamma and epsilon chains, while a peripheral stalk is formed by the delta and b chains.

The protein localises to the cell membrane. Functionally, f(1)F(0) ATP synthase produces ATP from ADP in the presence of a proton or sodium gradient. F-type ATPases consist of two structural domains, F(1) containing the extramembraneous catalytic core and F(0) containing the membrane proton channel, linked together by a central stalk and a peripheral stalk. During catalysis, ATP synthesis in the catalytic domain of F(1) is coupled via a rotary mechanism of the central stalk subunits to proton translocation. Its function is as follows. Key component of the F(0) channel; it plays a direct role in translocation across the membrane. A homomeric c-ring of between 10-14 subunits forms the central stalk rotor element with the F(1) delta and epsilon subunits. This Enterococcus hirae (strain ATCC 9790 / DSM 20160 / JCM 8729 / LMG 6399 / NBRC 3181 / NCIMB 6459 / NCDO 1258 / NCTC 12367 / WDCM 00089 / R) protein is ATP synthase subunit c.